The primary structure comprises 380 residues: Polygalacturonase 2 (380 aa).

The N-terminal stretch at 1 to 20 (MIAGSKLLMLGLFGALAVHA) is a signal peptide. Residues 21–38 (LPEPAKAQVTAAPKLEER) constitute a propeptide that is removed on maturation. A disulfide bond links cysteine 42 and cysteine 60. PbH1 repeat units lie at residues 173–204 (ATDL…DVGS) and 205–226 (STGI…AVNS). Residue aspartate 219 is the Proton donor of the active site. Cysteine 221 and cysteine 237 are joined by a disulfide. Histidine 241 is a catalytic residue. PbH1 repeat units follow at residues 256-277 (VANV…RIKT), 285-307 (VKNV…VIEQ), and 319-364 (TDGV…SVSG). Asparagine 287 carries an N-linked (GlcNAc...) asparagine glycan. Intrachain disulfides connect cysteine 347–cysteine 352 and cysteine 371–cysteine 380.

It belongs to the glycosyl hydrolase 28 family.

Its subcellular location is the secreted. It catalyses the reaction (1,4-alpha-D-galacturonosyl)n+m + H2O = (1,4-alpha-D-galacturonosyl)n + (1,4-alpha-D-galacturonosyl)m.. The polypeptide is Polygalacturonase 2 (PG2) (Penicillium olsonii).